The following is a 1159-amino-acid chain: Phosphatidylinositol 3-kinase age-1 (1159 aa).

Residues M1–S25 show a composition bias toward polar residues. The segment at M1–T28 is disordered. The region spanning S79 to D179 is the PI3K-ABD domain. Residues R272 to R363 form the PI3K-RBD domain. Residues L430–K588 form the C2 PI3K-type domain. The region spanning D607–G793 is the PIK helical domain. The region spanning V858–Y1159 is the PI3K/PI4K catalytic domain. A G-loop region spans residues V864–Q870. A catalytic loop region spans residues G1028–N1036. The tract at residues H1047 to T1073 is activation loop.

It belongs to the PI3/PI4-kinase family.

The catalysed reaction is a 1,2-diacyl-sn-glycero-3-phospho-(1D-myo-inositol) + ATP = a 1,2-diacyl-sn-glycero-3-phospho-(1D-myo-inositol-3-phosphate) + ADP + H(+). Functionally, phosphatidylinositol 3-kinase homolog that regulates longevity and diapause. Promotes cell survival during embryonic development by recruiting akt-1/2 to the plasma membrane through the production of PtdIns(3,4,5)P3. Could function in the development or neuroendocrine signaling of the dauer pathway. Mediates susceptibility to enteropathogenic E.coli infection. May negatively regulate AYI interneuron neurite outgrowth. Plays a role in aversive olfactory learning when an odor is associated with food deprivation. Regulates this process by promoting the nuclear relocalization of egl-4 in AWC olfactory neurons after odor conditioning. This chain is Phosphatidylinositol 3-kinase age-1 (age-1), found in Caenorhabditis briggsae.